The primary structure comprises 468 residues: Tyrosine-protein phosphatase YopH (468 aa).

Positions 127–194 (ARGHVSSHSH…TVSPYGPEAR (68 aa)) are disordered. Over residues 130–140 (HVSSHSHSVLH) the composition is skewed to low complexity. The region spanning 152 to 461 (SHLDPRTPPL…DVLIKLAEGQ (310 aa)) is the Tyrosine-protein phosphatase domain. The active-site Phosphocysteine intermediate is the cysteine 403.

This sequence belongs to the protein-tyrosine phosphatase family. Non-receptor class subfamily. As to quaternary structure, monomer.

It is found in the secreted. The enzyme catalyses O-phospho-L-tyrosyl-[protein] + H2O = L-tyrosyl-[protein] + phosphate. Functionally, essential virulence determinant. This protein is a protein tyrosine phosphatase. The essential function of YopH in Yersinia pathogenesis is host-protein dephosphorylation. It contributes to the ability of the bacteria to resist phagocytosis by peritoneal macrophages. The sequence is that of Tyrosine-protein phosphatase YopH (yopH) from Yersinia enterocolitica.